Reading from the N-terminus, the 66-residue chain is Large ribosomal subunit protein bL31 (66 aa).

Residues Cys16, Cys18, Cys36, and Cys39 each contribute to the Zn(2+) site.

This sequence belongs to the bacterial ribosomal protein bL31 family. Type A subfamily. As to quaternary structure, part of the 50S ribosomal subunit. Zn(2+) is required as a cofactor.

In terms of biological role, binds the 23S rRNA. In Anoxybacillus flavithermus (strain DSM 21510 / WK1), this protein is Large ribosomal subunit protein bL31.